We begin with the raw amino-acid sequence, 1401 residues long: Condensin complex subunit 1 (1401 aa).

The tract at residues 1–603 is interactions with SMC2 and SMC4; that stretch reads MAPQMYEFHL…TVCKNKPNMS (603 aa). Phosphoserine occurs at positions 20 and 585. Residues 576–596 are compositionally biased toward polar residues; the sequence is STQEKNPRESTGNMVTGQTVC. Disordered regions lie at residues 576–611, 956–978, and 1303–1401; these read STQEKNPRESTGNMVTGQTVCKNKPNMSDPEESRGN, REEQEHKTKDPKEKNTSSETTME, and LEIG…RHRS. The span at 956–971 shows a compositional bias: basic and acidic residues; the sequence is REEQEHKTKDPKEKNT. A compositionally biased stretch (polar residues) spans 1308–1336; sequence AGSQRAPSAKKPSTGSRYQPLASTASDND. 3 positions are modified to phosphoserine: Ser-1310, Ser-1315, and Ser-1330. Thr-1331 is subject to Phosphothreonine. Ser-1333 is modified (phosphoserine). Position 1339 is a phosphothreonine (Thr-1339). The Bipartite nuclear localization signal motif lies at 1342-1362; the sequence is PRRTTRRHPNTQQRASKKKPK. A compositionally biased stretch (basic residues) spans 1345-1362; sequence TTRRHPNTQQRASKKKPK. 5 positions are modified to phosphoserine: Ser-1366, Ser-1367, Ser-1370, Ser-1371, and Ser-1376. Residues 1369 to 1382 are compositionally biased toward acidic residues; the sequence is ESSEEDLSAEMTED. Thr-1384 and Thr-1389 each carry phosphothreonine; by CDK1. A Phosphoserine modification is found at Ser-1395.

This sequence belongs to the CND1 (condensin subunit 1) family. As to quaternary structure, component of the condensin complex, which contains the SMC2 and SMC4 heterodimer, and three non SMC subunits that probably regulate the complex: NCAPH/BRRN1, NCAPD2/CAPD2 and NCAPG. Interacts with histones H1 and H3. Post-translationally, phosphorylated by CDK1. Its phosphorylation, as well as that of NCAPH and NCAPG subunits, activates the condensin complex and is required for chromosome condensation.

The protein resides in the nucleus. Its subcellular location is the cytoplasm. The protein localises to the chromosome. Its function is as follows. Regulatory subunit of the condensin complex, a complex required for conversion of interphase chromatin into mitotic-like condense chromosomes. The condensin complex probably introduces positive supercoils into relaxed DNA in the presence of type I topoisomerases and converts nicked DNA into positive knotted forms in the presence of type II topoisomerases. May target the condensin complex to DNA via its C-terminal domain. May promote the resolution of double-strand DNA catenanes (intertwines) between sister chromatids. Condensin-mediated compaction likely increases tension in catenated sister chromatids, providing directionality for type II topoisomerase-mediated strand exchanges toward chromatid decatenation. Required for decatenation of non-centromeric ultrafine DNA bridges during anaphase. Early in neurogenesis, may play an essential role to ensure accurate mitotic chromosome condensation in neuron stem cells, ultimately affecting neuron pool and cortex size. The sequence is that of Condensin complex subunit 1 from Homo sapiens (Human).